Reading from the N-terminus, the 70-residue chain is Sec-independent protein translocase protein TatA (70 aa).

Residues 1-21 (MGSFSVWHWLIVLVIVLVLFG) form a helical membrane-spanning segment. The tract at residues 42–70 (GMADEDQTPPPADANANAKTVDHKADEIK) is disordered. The span at 61–70 (TVDHKADEIK) shows a compositional bias: basic and acidic residues.

The protein belongs to the TatA/E family. The Tat system comprises two distinct complexes: a TatABC complex, containing multiple copies of TatA, TatB and TatC subunits, and a separate TatA complex, containing only TatA subunits. Substrates initially bind to the TatABC complex, which probably triggers association of the separate TatA complex to form the active translocon.

The protein resides in the cell inner membrane. Functionally, part of the twin-arginine translocation (Tat) system that transports large folded proteins containing a characteristic twin-arginine motif in their signal peptide across membranes. TatA could form the protein-conducting channel of the Tat system. The protein is Sec-independent protein translocase protein TatA of Agrobacterium fabrum (strain C58 / ATCC 33970) (Agrobacterium tumefaciens (strain C58)).